Consider the following 445-residue polypeptide: Coronin-A (445 aa).

4 WD repeats span residues 77 to 117, 127 to 167, 170 to 209, and 259 to 299; these read GHKS…LTDS, GHKR…NLTT, GHSDMITSCEWNHNGSQIVTTCKDKKARVFDPRTNSIVNE, and DSAS…PYIH. The stretch at 410 to 444 forms a coiled coil; sequence KNEKELREEYEKLKIRVAYLESEIVKKDAKIKELT.

It belongs to the WD repeat coronin family. As to quaternary structure, binds to F-actin.

It localises to the cell surface. Required for normal motility. Participates in cytokinesis. This chain is Coronin-A (corA), found in Dictyostelium discoideum (Social amoeba).